Here is a 229-residue protein sequence, read N- to C-terminus: Urease accessory protein UreF (229 aa).

Belongs to the UreF family. In terms of assembly, ureD, UreF and UreG form a complex that acts as a GTP-hydrolysis-dependent molecular chaperone, activating the urease apoprotein by helping to assemble the nickel containing metallocenter of UreC. The UreE protein probably delivers the nickel.

The protein resides in the cytoplasm. Its function is as follows. Required for maturation of urease via the functional incorporation of the urease nickel metallocenter. The sequence is that of Urease accessory protein UreF from Staphylococcus aureus (strain USA300).